The following is a 427-amino-acid chain: Trigger factor (427 aa).

One can recognise a PPIase FKBP-type domain in the interval 163-248 (GDTVVIDFVG…VHEVKSKEVP (86 aa)).

This sequence belongs to the FKBP-type PPIase family. Tig subfamily.

Its subcellular location is the cytoplasm. It carries out the reaction [protein]-peptidylproline (omega=180) = [protein]-peptidylproline (omega=0). In terms of biological role, involved in protein export. Acts as a chaperone by maintaining the newly synthesized protein in an open conformation. Functions as a peptidyl-prolyl cis-trans isomerase. The polypeptide is Trigger factor (Streptococcus uberis (strain ATCC BAA-854 / 0140J)).